A 328-amino-acid polypeptide reads, in one-letter code: MKIFDYEDIQLVPNKCIVNSRSECDTTIQFGPRSFKLPVVPANMQTVMNETLAEWFAENDYFYIMHRFDEEGRIPFIKKMQEKGLFASISVGVKEREFGFVESLAAENVIPEYITIDIAHGHSDSVINMIKHIKKHIPEVFVIAGNVGTPEGVRELENAGADATKVGIGPGRVCITKIKTGFGTGGWQLSALNHCSKAARKPIIADGGIRTHGDIAKSIRFGASMVMVGSLFAAHEESPGETVELDGKMYKEYFGSASEFQKGEHKNVEGKKMFVEHKGSLFNTLTEMQQDLQSSISYAGGKDLNSLRKVDYVIVRNSIFNGDRDQNL.

Residue Cys-174 is the Thioimidate intermediate of the active site. NADP(+) is bound at residue 203-226 (IIADGGIRTHGDIAKSIRFGASMV).

Belongs to the IMPDH/GMPR family. GuaC type 2 subfamily.

The catalysed reaction is IMP + NH4(+) + NADP(+) = GMP + NADPH + 2 H(+). Its function is as follows. Catalyzes the irreversible NADPH-dependent deamination of GMP to IMP. It functions in the conversion of nucleobase, nucleoside and nucleotide derivatives of G to A nucleotides, and in maintaining the intracellular balance of A and G nucleotides. The protein is GMP reductase of Staphylococcus saprophyticus subsp. saprophyticus (strain ATCC 15305 / DSM 20229 / NCIMB 8711 / NCTC 7292 / S-41).